Consider the following 295-residue polypeptide: Protease HtpX (295 aa).

The next 2 helical transmembrane spans lie at 4-24 and 41-61; these read ILLF…TLSL and SSLL…SLFI. His147 is a binding site for Zn(2+). Residue Glu148 is part of the active site. His151 lines the Zn(2+) pocket. 2 consecutive transmembrane segments (helical) span residues 158-178 and 199-219; these read VTLA…ARII and VATI…VMWF. Glu224 is a binding site for Zn(2+).

It belongs to the peptidase M48B family. It depends on Zn(2+) as a cofactor.

It is found in the cell inner membrane. The polypeptide is Protease HtpX (Pseudomonas putida (strain ATCC 47054 / DSM 6125 / CFBP 8728 / NCIMB 11950 / KT2440)).